The following is a 156-amino-acid chain: Probable cyclic pyranopterin monophosphate synthase (156 aa).

Substrate is bound by residues 74 to 76 (LCH) and 110 to 111 (ME). Aspartate 125 is an active-site residue.

Belongs to the MoaC family. In terms of assembly, homohexamer; trimer of dimers.

The enzyme catalyses (8S)-3',8-cyclo-7,8-dihydroguanosine 5'-triphosphate = cyclic pyranopterin phosphate + diphosphate. Its pathway is cofactor biosynthesis; molybdopterin biosynthesis. Functionally, catalyzes the conversion of (8S)-3',8-cyclo-7,8-dihydroguanosine 5'-triphosphate to cyclic pyranopterin monophosphate (cPMP). The chain is Probable cyclic pyranopterin monophosphate synthase from Thermococcus onnurineus (strain NA1).